We begin with the raw amino-acid sequence, 441 residues long: Keratin, type I cytoskeletal 15 (441 aa).

Positions 2-91 (LLLGHASTST…GGSDLLLGTS (90 aa)) are head. The segment at 92 to 127 (GKEAMQNLNDRLASYLDKVRSLEGKNHELELKIKDW) is coil 1A. An IF rod domain is found at 92–407 (GKEAMQNLND…MLLDSEDSKG (316 aa)). The tract at residues 128 to 149 (YSQVIPGTGGPDARDYGHLEKE) is linker 1. A coil 1B region spans residues 150-241 (IEDLQNKVNN…KNHEEDMKAA (92 aa)). The interval 242 to 261 (SSGIAGQVNVELDAAPGTNL) is linker 12. A coil 2 region spans residues 262–403 (LDELDACRRD…ATYRMLLDSE (142 aa)). Residues 404-441 (DSKGSIINHKILTAIEKLVDGIVLSTEVLEKQIPVLSY) are tail.

This sequence belongs to the intermediate filament family. Heterotetramer of two type I and two type II keratins. In terms of tissue distribution, expressed in skin.

In Protopterus aethiopicus (Marbled lungfish), this protein is Keratin, type I cytoskeletal 15 (KRT15).